A 472-amino-acid chain; its full sequence is MHVHPISTFRVFQEGHLLRNSIAIFALTTLFYFIGAELRLVHELSLFWPLNGVMAGVFARYVWLNRLHYYAISYVAMLVYDAITTEWGLVSLAINFSNMMFIVTVALLVVRDKRLGKNKYEPVSALRLFNYCLIAALLCAIVGAIGSVSIDSLDFWPLLADWFSEQFSTGVLIVPCMLTLAIPGVLPRFKAEQMMPAIALIVSVIASVVIGGAGSLAFPLPALIWCAVRYTPQVTCLLTFVTGAVEIVLVANSVIDISVGSPFSIPQMFSARLGIATMAICPIMVSFSVAAINSLMKQVALRADFDFLTQVYSRSGLYEALKSPSLKQTQHLTVMLLDIDYFKSINDNYGHECGDKVLSVFARHIQKIVGDKGLVARMGGEEFAVAVPSVNPVDGLLMAEKIRKGVELQPFTWQQKTLYLTVSIGVGSGRASYRTLTDDFNKLMVEADTCLYRSKKDGRNRTSTMRYGEEVV.

Transmembrane regions (helical) follow at residues 21-41 (SIAIFALTTLFYFIGAELRLV), 44-64 (LSLFWPLNGVMAGVFARYVWL), 90-110 (VSLAINFSNMMFIVTVALLVV), 128-148 (LFNYCLIAALLCAIVGAIGSV), 167-187 (FSTGVLIVPCMLTLAIPGVLP), 198-218 (IALIVSVIASVVIGGAGSLAF), 237-257 (LLTFVTGAVEIVLVANSVIDI), and 273-293 (LGIATMAICPIMVSFSVAAIN). In terms of domain architecture, GGDEF spans 330 to 467 (QHLTVMLLDI…GRNRTSTMRY (138 aa)). Positions 338 and 339 each coordinate Mg(2+). The substrate site is built by Asn346, His351, and Asp355. Residue Glu381 coordinates Mg(2+).

In terms of assembly, homodimer. It depends on Mg(2+) as a cofactor.

Its subcellular location is the cell membrane. It carries out the reaction 2 GTP = 3',3'-c-di-GMP + 2 diphosphate. Its pathway is purine metabolism; 3',5'-cyclic di-GMP biosynthesis. In terms of biological role, catalyzes the synthesis of cyclic-di-GMP (c-di-GMP) via the condensation of 2 GTP molecules. In Escherichia coli O157:H7, this protein is Probable diguanylate cyclase DgcF.